A 235-amino-acid chain; its full sequence is Pyridoxine 5'-phosphate synthase (235 aa).

Asn-6 is a 3-amino-2-oxopropyl phosphate binding site. 8-9 (DH) is a 1-deoxy-D-xylulose 5-phosphate binding site. Position 17 (Arg-17) interacts with 3-amino-2-oxopropyl phosphate. His-42 acts as the Proton acceptor in catalysis. The 1-deoxy-D-xylulose 5-phosphate site is built by Arg-44 and His-49. The Proton acceptor role is filled by Glu-69. Thr-99 contacts 1-deoxy-D-xylulose 5-phosphate. Residue His-189 is the Proton donor of the active site. Residues Gly-190 and 211-212 (GH) each bind 3-amino-2-oxopropyl phosphate.

Belongs to the PNP synthase family. In terms of assembly, homooctamer; tetramer of dimers.

It localises to the cytoplasm. It catalyses the reaction 3-amino-2-oxopropyl phosphate + 1-deoxy-D-xylulose 5-phosphate = pyridoxine 5'-phosphate + phosphate + 2 H2O + H(+). The protein operates within cofactor biosynthesis; pyridoxine 5'-phosphate biosynthesis; pyridoxine 5'-phosphate from D-erythrose 4-phosphate: step 5/5. In terms of biological role, catalyzes the complicated ring closure reaction between the two acyclic compounds 1-deoxy-D-xylulose-5-phosphate (DXP) and 3-amino-2-oxopropyl phosphate (1-amino-acetone-3-phosphate or AAP) to form pyridoxine 5'-phosphate (PNP) and inorganic phosphate. The sequence is that of Pyridoxine 5'-phosphate synthase from Chlorobium phaeovibrioides (strain DSM 265 / 1930) (Prosthecochloris vibrioformis (strain DSM 265)).